The primary structure comprises 500 residues: Putative beta-lactamase-like 1 (500 aa).

This sequence belongs to the beta-lactamase family.

The protein is Putative beta-lactamase-like 1 (LACTBL1) of Homo sapiens (Human).